The sequence spans 312 residues: Atrochrysone carboxyl ACP thioesterase AacuM (312 aa).

Residues His-103, His-105, Asp-107, and His-108 each contribute to the Zn(2+) site. Asp-107 functions as the Proton donor/acceptor in the catalytic mechanism.

It belongs to the metallo-beta-lactamase superfamily. Zn(2+) serves as cofactor.

It catalyses the reaction atrochrysone carboxyl-[ACP] + H2O = atrochrysone carboxylate + holo-[ACP] + H(+). The protein operates within secondary metabolite biosynthesis. Functionally, atrochrysone carboxyl ACP thioesterase; part of the gene cluster that mediates the biosynthesis of the tetrahydroxanthone dimer secalonic acid D. The pathway begins with the synthesis of atrochrysone thioester by the polyketide synthase AacuL. The atrochrysone carboxyl ACP thioesterase AacuM then breaks the thioester bond and releases the atrochrysone carboxylic acid from AacuL. Atrochrysone carboxylic acid is decarboxylated by the decarboxylase AacuI, and oxidized by the anthrone oxygenase AacuG to yield emodin. Emodin is then reduced to emodin hydroquinone by a yet unidentified oxidoreductase. A-ring reduction by the short chain dehydrogenase AacuN, dehydration by the scytalone dehydratase-like protein AacuK and probable spontaneous re-oxidation, results in overall deoxygenation to chrysophanol. Baeyer-Villiger oxidation by the Baeyer-Villiger monooxygenase (BVMO) AacuH then yields monodictyphenone. Monodictyphenone is transformed into compounds with the tetrahydroxanthone skeleton via methylesterification by the methyltransferase AacuQ, followed by the action of the flavin-dependent monooxygenase AacuC, the isomerase AacuP, and the short chain dehydrogenase/reductase AacuF or AacuD. AacuF and AacuD should accept the same compound as a substrate but perform the ketoreduction with a different stereoselectivity, thus yielding blennolides B and A, respectively. In the final step of the biosynthesis, the cytochrome P450 monooxygenase AacuE accepts blennolide B and/or blennolide A to conduct the dimerization reaction to furnish the tetrahydroxanthone dimers, secalonic acids D, B, and F. This chain is Atrochrysone carboxyl ACP thioesterase AacuM, found in Aspergillus aculeatus (strain ATCC 16872 / CBS 172.66 / WB 5094).